Here is a 350-residue protein sequence, read N- to C-terminus: Heat-inducible transcription repressor HrcA (350 aa).

This sequence belongs to the HrcA family.

In terms of biological role, negative regulator of class I heat shock genes (grpE-dnaK-dnaJ and groELS operons). Prevents heat-shock induction of these operons. The sequence is that of Heat-inducible transcription repressor HrcA from Xanthomonas campestris pv. campestris (strain ATCC 33913 / DSM 3586 / NCPPB 528 / LMG 568 / P 25).